Consider the following 330-residue polypeptide: Flotillin-like protein FloA (330 aa).

Helical transmembrane passes span 5-25 and 27-47; these read FLPL…FYYV and FLLW…QLFL.

Belongs to the flotillin-like FloA family. Homooligomerizes.

It localises to the cell membrane. It is found in the membrane raft. Functionally, found in functional membrane microdomains (FMM) that may be equivalent to eukaryotic membrane rafts. FMMs are highly dynamic and increase in number as cells age. Flotillins are thought to be important factors in membrane fluidity. This Parabacteroides distasonis (strain ATCC 8503 / DSM 20701 / CIP 104284 / JCM 5825 / NCTC 11152) protein is Flotillin-like protein FloA.